Reading from the N-terminus, the 523-residue chain is GMP synthase [glutamine-hydrolyzing] (523 aa).

A Glutamine amidotransferase type-1 domain is found at lysine 18–aspartate 208. Cysteine 95 functions as the Nucleophile in the catalytic mechanism. Residues histidine 182 and glutamate 184 contribute to the active site. Residues tryptophan 209–arginine 398 form the GMPS ATP-PPase domain. Serine 236–serine 242 contributes to the ATP binding site.

In terms of assembly, homodimer.

The catalysed reaction is XMP + L-glutamine + ATP + H2O = GMP + L-glutamate + AMP + diphosphate + 2 H(+). It functions in the pathway purine metabolism; GMP biosynthesis; GMP from XMP (L-Gln route): step 1/1. In terms of biological role, catalyzes the synthesis of GMP from XMP. In Treponema denticola (strain ATCC 35405 / DSM 14222 / CIP 103919 / JCM 8153 / KCTC 15104), this protein is GMP synthase [glutamine-hydrolyzing].